The chain runs to 120 residues: Immunogenic miracidial antigen 5D (120 aa).

The segment at 41–120 (HIDVGDEDYH…PKKYGSGYKH (80 aa)) is disordered. Residues 45 to 66 (GDEDYHDGDDDVDYTDDVDDVD) show a composition bias toward acidic residues.

This sequence belongs to the immunogenic miracidial antigen family.

The protein is Immunogenic miracidial antigen 5D (5D) of Schistosoma japonicum (Blood fluke).